The following is a 373-amino-acid chain: Dual-specificity RNA methyltransferase RlmN (373 aa).

Catalysis depends on Glu94, which acts as the Proton acceptor. Residues 100-339 (EEDRATLCVS…VIVRKTRGDD (240 aa)) enclose the Radical SAM core domain. Residues Cys107 and Cys344 are joined by a disulfide bond. Residues Cys114, Cys118, and Cys121 each contribute to the [4Fe-4S] cluster site. S-adenosyl-L-methionine contacts are provided by residues 168–169 (GE), Ser200, 222–224 (SIH), and Asn301. Cys344 (S-methylcysteine intermediate) is an active-site residue.

The protein belongs to the radical SAM superfamily. RlmN family. The cofactor is [4Fe-4S] cluster.

It is found in the cytoplasm. It carries out the reaction adenosine(2503) in 23S rRNA + 2 reduced [2Fe-2S]-[ferredoxin] + 2 S-adenosyl-L-methionine = 2-methyladenosine(2503) in 23S rRNA + 5'-deoxyadenosine + L-methionine + 2 oxidized [2Fe-2S]-[ferredoxin] + S-adenosyl-L-homocysteine. It catalyses the reaction adenosine(37) in tRNA + 2 reduced [2Fe-2S]-[ferredoxin] + 2 S-adenosyl-L-methionine = 2-methyladenosine(37) in tRNA + 5'-deoxyadenosine + L-methionine + 2 oxidized [2Fe-2S]-[ferredoxin] + S-adenosyl-L-homocysteine. In terms of biological role, specifically methylates position 2 of adenine 2503 in 23S rRNA and position 2 of adenine 37 in tRNAs. m2A2503 modification seems to play a crucial role in the proofreading step occurring at the peptidyl transferase center and thus would serve to optimize ribosomal fidelity. The polypeptide is Dual-specificity RNA methyltransferase RlmN (Shewanella loihica (strain ATCC BAA-1088 / PV-4)).